Here is a 204-residue protein sequence, read N- to C-terminus: uncharacterized protein (204 aa).

The interval 47-108 (TDSSDDEGGA…EDSDEEGEGG (62 aa)) is disordered. Over residues 49–106 (SSDDEGGASSGDEGEASSDDEGDASSDDEEEASSDGEGVVEDEETLDAEGEDSDEEGE) the composition is skewed to acidic residues.

The protein localises to the mitochondrion. This is an uncharacterized protein from Paramecium tetraurelia.